We begin with the raw amino-acid sequence, 244 residues long: Thiol S-methyltransferase TMT1B (244 aa).

The N-terminal stretch at 1–23 (MDALVLFLQLLVLLLTLPLHLLA) is a signal peptide.

Belongs to the methyltransferase superfamily.

The protein localises to the endoplasmic reticulum membrane. It localises to the lipid droplet. Its subcellular location is the microsome. It is found in the cytoplasm. The protein resides in the cytosol. The catalysed reaction is a thiol + S-adenosyl-L-methionine = a methyl thioether + S-adenosyl-L-homocysteine + H(+). In terms of biological role, thiol S-methyltransferase that catalyzes the transfer of a methyl group from S-adenosyl-L-methionine to alkyl and phenolic thiol-containing acceptor substrates. Together with TMT1B accounts for most of S-thiol methylation activity in the endoplasmic reticulum of hepatocytes. Selectively methylates S-centered nucleophiles from metabolites such as hydrogen sulfide and dithiothreitol. This Mus musculus (Mouse) protein is Thiol S-methyltransferase TMT1B.